Consider the following 276-residue polypeptide: Rhomboid protease GlpG (276 aa).

6 helical membrane-spanning segments follow: residues 94–114 (GPVT…MQIL), 142–162 (ALMH…WYLG), 169–189 (LGSG…GYVQ), 192–212 (FSGP…GYVW), 229–249 (LIIF…GMSM), and 250–270 (ANGA…VDSL). Ser201 (nucleophile) is an active-site residue. His254 is a catalytic residue.

Belongs to the peptidase S54 family.

It localises to the cell inner membrane. The enzyme catalyses Cleaves type-1 transmembrane domains using a catalytic dyad composed of serine and histidine that are contributed by different transmembrane domains.. In terms of biological role, rhomboid-type serine protease that catalyzes intramembrane proteolysis. This chain is Rhomboid protease GlpG, found in Escherichia fergusonii (strain ATCC 35469 / DSM 13698 / CCUG 18766 / IAM 14443 / JCM 21226 / LMG 7866 / NBRC 102419 / NCTC 12128 / CDC 0568-73).